A 436-amino-acid chain; its full sequence is Glutamyl-tRNA reductase (436 aa).

Substrate-binding positions include 49–52 (TCNR), Ser109, 114–116 (EGQ), and Gln120. The Nucleophile role is filled by Cys50. Residue 198 to 203 (GAGRMS) coordinates NADP(+).

This sequence belongs to the glutamyl-tRNA reductase family. Homodimer.

It catalyses the reaction (S)-4-amino-5-oxopentanoate + tRNA(Glu) + NADP(+) = L-glutamyl-tRNA(Glu) + NADPH + H(+). Its pathway is porphyrin-containing compound metabolism; protoporphyrin-IX biosynthesis; 5-aminolevulinate from L-glutamyl-tRNA(Glu): step 1/2. The protein operates within porphyrin-containing compound metabolism; chlorophyll biosynthesis. In terms of biological role, catalyzes the NADPH-dependent reduction of glutamyl-tRNA(Glu) to glutamate 1-semialdehyde (GSA). The chain is Glutamyl-tRNA reductase from Prochlorococcus marinus (strain MIT 9313).